Here is a 118-residue protein sequence, read N- to C-terminus: Ribosome-binding factor A (118 aa).

Belongs to the RbfA family. Monomer. Binds 30S ribosomal subunits, but not 50S ribosomal subunits or 70S ribosomes.

It is found in the cytoplasm. Its function is as follows. One of several proteins that assist in the late maturation steps of the functional core of the 30S ribosomal subunit. Associates with free 30S ribosomal subunits (but not with 30S subunits that are part of 70S ribosomes or polysomes). Required for efficient processing of 16S rRNA. May interact with the 5'-terminal helix region of 16S rRNA. The protein is Ribosome-binding factor A of Geobacter metallireducens (strain ATCC 53774 / DSM 7210 / GS-15).